The primary structure comprises 190 residues: MSNQDEPQNSPEEFAEDQQADVALEEASSDSSETAADVDLVARIEALEAELTEAKEQALRAAAEMHNVRRRAEQDVEKAHKFGLEKFVSDMLPVADNLGRALEAAAAEGADMTAVTEGVDLTLKSLMDSLKKHGVESVNPEGEPFNPELHQAMTAVENPDAEPNTVINVYQVGYTLHGRLVRPAMVVVSK.

Polar residues predominate over residues 1-11 (MSNQDEPQNSP). The disordered stretch occupies residues 1-36 (MSNQDEPQNSPEEFAEDQQADVALEEASSDSSETAA). Residues 13 to 28 (EFAEDQQADVALEEAS) are compositionally biased toward acidic residues.

The protein belongs to the GrpE family. Homodimer.

The protein localises to the cytoplasm. Functionally, participates actively in the response to hyperosmotic and heat shock by preventing the aggregation of stress-denatured proteins, in association with DnaK and GrpE. It is the nucleotide exchange factor for DnaK and may function as a thermosensor. Unfolded proteins bind initially to DnaJ; upon interaction with the DnaJ-bound protein, DnaK hydrolyzes its bound ATP, resulting in the formation of a stable complex. GrpE releases ADP from DnaK; ATP binding to DnaK triggers the release of the substrate protein, thus completing the reaction cycle. Several rounds of ATP-dependent interactions between DnaJ, DnaK and GrpE are required for fully efficient folding. This is Protein GrpE from Teredinibacter turnerae (strain ATCC 39867 / T7901).